The chain runs to 827 residues: Sporozoite surface protein 2 (827 aa).

A signal peptide spans 1–22 (MKLLGNSKYIFVVLLLCISVFL). Residues 43 to 228 (DIHILLDGSG…NMIKPFLTKV (186 aa)) form the VWFA domain. Residues 235–281 (IAHCGKWEEWSECSTTCDEGRKIRRRQILHPGCVSEMTTPCKVRDCP) enclose the TSP type-1 domain. Disulfide bonds link Cys238–Cys267, Cys247–Cys275, and Cys251–Cys280. The tract at residues 278 to 761 (RDCPQIPIPP…NKNQSKSNNG (484 aa)) is disordered. Low complexity predominate over residues 301 to 388 (EEPVNPNDPN…NNPNDPSNPN (88 aa)). The 29 X 3 AA tandem repeats stretch occupies residues 306-392 (PNDPNDPNNP…DPSNPNNPNP (87 aa)). Positions 392 to 407 (PKKRNPKRRNPNKPKP) are enriched in basic residues. The segment at 402 to 514 (PNKPKPNKPN…EPSNPNEPSN (113 aa)) is 20 tandem tetra-/hexapeptide repeats. A compositionally biased stretch (pro residues) spans 408-464 (NKPNPNKPNPNEPSNPNKPNPNEPSNPNKPNPNEPSNPNKPNPNEPSNPNKPNPNEP). Residues 465-567 (LNPNEPSNPN…KEPSNPNEPS (103 aa)) show a composition bias toward low complexity. 2 tandem repeats follow at residues 603-613 (PEESNPKEPIN) and 614-624 (PEESNPKEPIN). The tract at residues 603 to 624 (PEESNPKEPINPEESNPKEPIN) is 2 X 11 AA tandem repeats. Residues 657–671 (KGNNIPSNLPENPSD) are compositionally biased toward polar residues. Over residues 709 to 724 (YKGHEERIPKPHRSND) the composition is skewed to basic and acidic residues. Residues 764–787 (IAGGIIGGLAILGCAGVGYNFIAG) form a helical membrane-spanning segment.

The protein localises to the cell membrane. This chain is Sporozoite surface protein 2 (SSP2), found in Plasmodium yoelii yoelii.